The chain runs to 312 residues: Ribonuclease HIII (312 aa).

The RNase H type-2 domain occupies 95–311 (FNCIGSDEAG…REKAQKILKP (217 aa)). A divalent metal cation is bound by residues Asp-101, Glu-102, and Asp-206.

The protein belongs to the RNase HII family. RnhC subfamily. Mn(2+) serves as cofactor. It depends on Mg(2+) as a cofactor.

Its subcellular location is the cytoplasm. It catalyses the reaction Endonucleolytic cleavage to 5'-phosphomonoester.. In terms of biological role, endonuclease that specifically degrades the RNA of RNA-DNA hybrids. The sequence is that of Ribonuclease HIII from Staphylococcus aureus (strain Mu3 / ATCC 700698).